Consider the following 668-residue polypeptide: Ras guanine nucleotide exchange factor D (668 aa).

The Rho-GAP domain maps to 27–224; sequence KKLESIFGIA…LMVMDIDEFD (198 aa). An N-terminal Ras-GEF domain is found at 237-362; it reads GESIVKAATF…YFQTFFKPVI (126 aa). In terms of domain architecture, Ras-GEF spans 433 to 663; sequence GSNIIAQQIT…HSISHKLEPR (231 aa).

Functionally, promotes the exchange of Ras-bound GDP by GTP. This chain is Ras guanine nucleotide exchange factor D (gefD), found in Dictyostelium discoideum (Social amoeba).